The sequence spans 216 residues: MGQKVNPLGFRLRITSQHRSSWFATKESYPQLLEQDFKIRSYINRELEAAGISKIEISRNANQLEVSVYTSRPGIIVGRSGLGIEKIKTDILRLLKQDISIRINVIELTNPDADANLIGEFIAQQLEKRVAFRRATRQAIQKAQRANVQGIKVQVSGRLNGAEIARSEWVREGRVPLQTLRANIDYATKEAHTTYGILGIKVWVFNGEQTPTYAVI.

The KH type-2 domain occupies 39–109 (IRSYINRELE…SIRINVIELT (71 aa)).

This sequence belongs to the universal ribosomal protein uS3 family. As to quaternary structure, part of the 30S ribosomal subunit.

It is found in the plastid. The protein resides in the chloroplast. This Guillardia theta (Cryptophyte) protein is Small ribosomal subunit protein uS3c (rps3).